The following is a 129-amino-acid chain: Follitropin subunit beta (129 aa).

A signal peptide spans 1-20 (MKTVQFCFLFCCWKAICCNS). Intrachain disulfides connect Cys-21–Cys-69, Cys-35–Cys-84, Cys-38–Cys-122, Cys-46–Cys-100, Cys-50–Cys-102, and Cys-105–Cys-112. Residues Asn-25 and Asn-42 are each glycosylated (N-linked (GlcNAc...) asparagine).

It belongs to the glycoprotein hormones subunit beta family. As to quaternary structure, heterodimer. The active follitropin is a heterodimer composed of an alpha chain/CGA shared with other hormones and a unique beta chain/FSHB shown here.

The protein localises to the secreted. Together with the alpha chain CGA constitutes follitropin, the follicle-stimulating hormone, and provides its biological specificity to the hormone heterodimer. Binds FSHR, a G protein-coupled receptor, on target cells to activate downstream signaling pathways. Follitropin is involved in follicle development and spermatogenesis in reproductive organs. This is Follitropin subunit beta (FSHB) from Aotus nancymaae (Ma's night monkey).